The chain runs to 862 residues: Rab GTPase-binding effector protein 1 (862 aa).

The residue at position 2 (A2) is an N-acetylalanine. Positions 11 to 345 form a coiled coil; sequence DVSLQQRVAE…KKTDTEEEVK (335 aa). K282 bears the N6-acetyllysine mark. A disordered region spans residues 315–374; sequence ELKKKDQEEDEQQRVNKRKDNKKTDTEEEVKIPVVCALTQEESSTPLSNEEEHLDSTHGS. Residues 336–345 are compositionally biased toward basic and acidic residues; sequence KKTDTEEEVK. 3 positions are modified to phosphoserine: S374, S377, and S407. Residue T408 is modified to Phosphothreonine. A Phosphoserine modification is found at S410. A coiled-coil region spans residues 534-816; the sequence is DMCSNYEKQL…LQTELDVSEQ (283 aa).

Belongs to the rabaptin family. As to quaternary structure, heterodimer with RABGEF1. The heterodimer binds RAB4A and RAB5A that have been activated by GTP-binding. Interacts with TSC2. Interacts with GGA1 (via GAE domain), GGA2 (via GAE domain) and GGA3 (via GAE domain). Interacts with AP1G1 (via GAE domain). Interacts with AP1G2 (via GAE domain). Interacts with ECPAS. Interacts with KCNH1. Interacts with PKD1 (via C-terminal domain) and GGA1; the interactions recruit PKD1:PKD2 complex to GGA1 and ARL3 at trans-Golgi network. Interacts with KCNH1. Post-translationally, proteolytic cleavage by caspases in apoptotic cells causes loss of endosome fusion activity.

It localises to the cytoplasm. It is found in the early endosome. Its subcellular location is the recycling endosome. The protein resides in the cytoplasmic vesicle. In terms of biological role, rab effector protein acting as linker between gamma-adaptin, RAB4A and RAB5A. Involved in endocytic membrane fusion and membrane trafficking of recycling endosomes. Involved in KCNH1 channels trafficking to and from the cell membrane. Stimulates RABGEF1 mediated nucleotide exchange on RAB5A. Mediates the traffic of PKD1:PKD2 complex from the endoplasmic reticulum through the Golgi to the cilium. This Mus musculus (Mouse) protein is Rab GTPase-binding effector protein 1 (Rabep1).